A 453-amino-acid polypeptide reads, in one-letter code: Pup--protein ligase (453 aa).

Glu-9 contributes to the Mg(2+) binding site. Arg-53 serves as a coordination point for ATP. Tyr-55 lines the Mg(2+) pocket. The Proton acceptor role is filled by Asp-57. Glu-63 lines the Mg(2+) pocket. ATP is bound by residues Thr-66 and Trp-420.

Belongs to the Pup ligase/Pup deamidase family. Pup-conjugating enzyme subfamily.

It carries out the reaction ATP + [prokaryotic ubiquitin-like protein]-L-glutamate + [protein]-L-lysine = ADP + phosphate + N(6)-([prokaryotic ubiquitin-like protein]-gamma-L-glutamyl)-[protein]-L-lysine.. It functions in the pathway protein degradation; proteasomal Pup-dependent pathway. The protein operates within protein modification; protein pupylation. Functionally, catalyzes the covalent attachment of the prokaryotic ubiquitin-like protein modifier Pup to the proteasomal substrate proteins, thereby targeting them for proteasomal degradation. This tagging system is termed pupylation. The ligation reaction involves the side-chain carboxylate of the C-terminal glutamate of Pup and the side-chain amino group of a substrate lysine. The protein is Pup--protein ligase of Streptomyces scabiei (strain 87.22).